Consider the following 322-residue polypeptide: Malate dehydrogenase 1 (322 aa).

Residues G10–G15 and D34 contribute to the NAD(+) site. Residues R83 and R89 each coordinate substrate. Residues N96 and I119 to N121 each bind NAD(+). N121 and R152 together coordinate substrate. The Proton acceptor role is filled by H176.

The protein belongs to the LDH/MDH superfamily. MDH type 3 family.

It carries out the reaction (S)-malate + NAD(+) = oxaloacetate + NADH + H(+). Its function is as follows. Catalyzes the reversible oxidation of malate to oxaloacetate. The chain is Malate dehydrogenase 1 from Rhodopseudomonas palustris (strain BisB18).